The following is a 480-amino-acid chain: UDP-N-acetylmuramate--L-alanine ligase (480 aa).

Residue 129–135 (GTHGKTT) coordinates ATP.

Belongs to the MurCDEF family.

Its subcellular location is the cytoplasm. The enzyme catalyses UDP-N-acetyl-alpha-D-muramate + L-alanine + ATP = UDP-N-acetyl-alpha-D-muramoyl-L-alanine + ADP + phosphate + H(+). Its pathway is cell wall biogenesis; peptidoglycan biosynthesis. In terms of biological role, cell wall formation. This chain is UDP-N-acetylmuramate--L-alanine ligase, found in Mannheimia succiniciproducens (strain KCTC 0769BP / MBEL55E).